The chain runs to 470 residues: Histidine--tRNA ligase (470 aa).

The protein belongs to the class-II aminoacyl-tRNA synthetase family. Homodimer.

The protein localises to the cytoplasm. The catalysed reaction is tRNA(His) + L-histidine + ATP = L-histidyl-tRNA(His) + AMP + diphosphate + H(+). This is Histidine--tRNA ligase from Xanthomonas oryzae pv. oryzae (strain PXO99A).